A 220-amino-acid polypeptide reads, in one-letter code: Putative amino-acid transporter YisU (220 aa).

The next 6 helical transmembrane spans lie at 15 to 35, 67 to 87, 89 to 109, 128 to 148, 161 to 181, and 195 to 215; these read FFSMNAIIHGIVLAFGLILPL, TLLIVLAVAGVSVIVQELPVF, TVMMAGGFLFLLYMGWVTWNI, AFAAAVSLLNPHAILDTIGVI, WLFMAACIAVSWIWFISLAIA, and MLIVNKCSAAVMWAAAGYFGV.

This sequence belongs to the LysE/ArgO transporter (TC 2.A.75) family.

The protein resides in the cell membrane. The sequence is that of Putative amino-acid transporter YisU (yisU) from Bacillus subtilis (strain 168).